Here is a 259-residue protein sequence, read N- to C-terminus: MGLLELCEQVFGTADLYQVLGVRREASDGEVRRGYHKVSLQVHPDRVEEDQKEDATRRFQILGRVYAVLSDKEQKAVYDEQGTVDEDSAGLNQDRDWDAYWRLLFKKISLEDIQAFEKTYKGSEEELNDIKQAYLDFKGDMDQIMESVLCVQYTDEPRIRNIIQKAIESKEIPAYSAFVKESKQKMNARKRRAQEEAKEAELSRKELGLEEGVDNLKALIQSRQKDRQKEMDSFLAQMEAKYCKPSKGGKRTALKKEKK.

Residues 15 to 82 (DLYQVLGVRR…EQKAVYDEQG (68 aa)) form the J domain. S109 is subject to Phosphoserine. Residues 171-248 (EIPAYSAFVK…EAKYCKPSKG (78 aa)) form a required for histone binding region.

In terms of assembly, forms a co-chaperone complex with MCM2 and histone H3.3-H4 dimers. Within the complex, interacts (via C-terminus) with MCM2 (via N-terminus); the interaction is histone-dependent. Within the complex, interacts (via C-terminus) with histone H3.3-H4 heterodimers; the interaction is direct. Interacts with histones H4, H3.3, H3.2 and H3.1, but not with CENPA or the testis-specific histone H3.1t. Interacts (via J domain) with HSPA1A, HSPA1B and HSPA8. May interact with TONSL; the interaction seems to be histone-dependent. May interact with HSPA8 and BAG2; the interactions seem to be histone-dependent.

The protein resides in the nucleus. It localises to the cytoplasm. It is found in the cell membrane. Functionally, acts as a dual histone chaperone and heat shock co-chaperone. As a histone chaperone, forms a co-chaperone complex with MCM2 and histone H3-H4 heterodimers; and may thereby assist MCM2 in histone H3-H4 heterodimer recognition and facilitate the assembly of histones into nucleosomes. May also act as a histone co-chaperone together with TONSL. May recruit histone chaperones ASF1A, NASP and SPT2 to histone H3-H4 heterodimers. Also plays a role as co-chaperone of the HSP70 family of molecular chaperone proteins, such as HSPA1A, HSPA1B and HSPA8. As a co-chaperone, may play a role in the recruitment of HSP70-type molecular chaperone machinery to histone H3-H4 substrates, thereby maintaining the histone structural integrity. Exhibits activity to assemble histones onto DNA in vitro. The sequence is that of DnaJ homolog subfamily C member 9 (Dnajc9) from Mus musculus (Mouse).